The following is a 631-amino-acid chain: Phosphomethylpyrimidine synthase (631 aa).

Residues Asn239, Met268, Tyr297, His333, 353–355, 394–397, and Glu433 each bind substrate; these read SRG and DGLR. His437 serves as a coordination point for Zn(2+). Substrate is bound at residue Tyr460. A Zn(2+)-binding site is contributed by His501. Residues Cys581, Cys584, and Cys589 each coordinate [4Fe-4S] cluster.

The protein belongs to the ThiC family. As to quaternary structure, homodimer. [4Fe-4S] cluster is required as a cofactor.

The catalysed reaction is 5-amino-1-(5-phospho-beta-D-ribosyl)imidazole + S-adenosyl-L-methionine = 4-amino-2-methyl-5-(phosphooxymethyl)pyrimidine + CO + 5'-deoxyadenosine + formate + L-methionine + 3 H(+). It functions in the pathway cofactor biosynthesis; thiamine diphosphate biosynthesis. Catalyzes the synthesis of the hydroxymethylpyrimidine phosphate (HMP-P) moiety of thiamine from aminoimidazole ribotide (AIR) in a radical S-adenosyl-L-methionine (SAM)-dependent reaction. The protein is Phosphomethylpyrimidine synthase of Escherichia coli (strain 55989 / EAEC).